The chain runs to 561 residues: Dihydroxy-acid dehydratase (561 aa).

A Mg(2+)-binding site is contributed by aspartate 80. A [2Fe-2S] cluster-binding site is contributed by cysteine 121. Residues aspartate 122 and lysine 123 each contribute to the Mg(2+) site. Residue lysine 123 is modified to N6-carboxylysine. Cysteine 194 is a binding site for [2Fe-2S] cluster. Glutamate 448 is a binding site for Mg(2+). Serine 474 serves as the catalytic Proton acceptor.

It belongs to the IlvD/Edd family. As to quaternary structure, homodimer. It depends on [2Fe-2S] cluster as a cofactor. The cofactor is Mg(2+).

It catalyses the reaction (2R)-2,3-dihydroxy-3-methylbutanoate = 3-methyl-2-oxobutanoate + H2O. It carries out the reaction (2R,3R)-2,3-dihydroxy-3-methylpentanoate = (S)-3-methyl-2-oxopentanoate + H2O. It functions in the pathway amino-acid biosynthesis; L-isoleucine biosynthesis; L-isoleucine from 2-oxobutanoate: step 3/4. Its pathway is amino-acid biosynthesis; L-valine biosynthesis; L-valine from pyruvate: step 3/4. Functionally, functions in the biosynthesis of branched-chain amino acids. Catalyzes the dehydration of (2R,3R)-2,3-dihydroxy-3-methylpentanoate (2,3-dihydroxy-3-methylvalerate) into 2-oxo-3-methylpentanoate (2-oxo-3-methylvalerate) and of (2R)-2,3-dihydroxy-3-methylbutanoate (2,3-dihydroxyisovalerate) into 2-oxo-3-methylbutanoate (2-oxoisovalerate), the penultimate precursor to L-isoleucine and L-valine, respectively. The sequence is that of Dihydroxy-acid dehydratase from Anaeromyxobacter sp. (strain Fw109-5).